Consider the following 427-residue polypeptide: Glutamate-1-semialdehyde 2,1-aminomutase (427 aa).

Lys-265 carries the post-translational modification N6-(pyridoxal phosphate)lysine.

This sequence belongs to the class-III pyridoxal-phosphate-dependent aminotransferase family. HemL subfamily. Homodimer. The cofactor is pyridoxal 5'-phosphate.

The protein localises to the cytoplasm. It catalyses the reaction (S)-4-amino-5-oxopentanoate = 5-aminolevulinate. It functions in the pathway porphyrin-containing compound metabolism; protoporphyrin-IX biosynthesis; 5-aminolevulinate from L-glutamyl-tRNA(Glu): step 2/2. In Burkholderia mallei (strain NCTC 10229), this protein is Glutamate-1-semialdehyde 2,1-aminomutase.